The sequence spans 389 residues: Ribonucleoside-diphosphate reductase subunit M2 (389 aa).

Position 20 is a phosphoserine (serine 20). Threonine 33 carries the phosphothreonine modification. A Cy motif is present at residues 49–51; sequence RRI. Positions 138, 169, and 172 each coordinate Fe cation. Tyrosine 176 is a catalytic residue. 3 residues coordinate Fe cation: glutamate 232, glutamate 266, and histidine 269.

The protein belongs to the ribonucleoside diphosphate reductase small chain family. In terms of assembly, heterodimer of a large and a small subunit. Interacts (via Cy motif and when phosphorylated at Thr-33) with CCNF; the interaction occurs exclusively in G2 and early M. It depends on Fe cation as a cofactor. In terms of processing, phosphorylation on Ser-20 relieves the inhibitory effect on Wnt signaling. Phosphorylated on Thr-33 by CDK1 and CDK2; predominantly in G2 and M phase. Ubiquitinated by the SCF(CCNF) E3 ubiquitin-protein ligase complex; leading to its degradation by the proteasome.

The protein localises to the cytoplasm. The protein resides in the nucleus. It catalyses the reaction a 2'-deoxyribonucleoside 5'-diphosphate + [thioredoxin]-disulfide + H2O = a ribonucleoside 5'-diphosphate + [thioredoxin]-dithiol. Functionally, provides the precursors necessary for DNA synthesis. Catalyzes the biosynthesis of deoxyribonucleotides from the corresponding ribonucleotides. Inhibits Wnt signaling. This chain is Ribonucleoside-diphosphate reductase subunit M2 (RRM2), found in Macaca fascicularis (Crab-eating macaque).